An 863-amino-acid polypeptide reads, in one-letter code: Scm-like with four MBT domains protein 1 (863 aa).

MBT repeat units follow at residues 20-120 (FSWE…LEAP), 128-232 (SDWN…LQPP), 242-346 (ADWQ…INPP), and 354-451 (FDWA…LSTP). Positions 638-773 (KKKNKRIGRP…SDDENKPPSP (136 aa)) are disordered. Residues 660–679 (KSSKRRKRRKNIFVHKKKRS) show a composition bias toward basic residues. Residues 680 to 691 (SASVDNTPVGSP) show a composition bias toward polar residues. 2 stretches are compositionally biased toward acidic residues: residues 696–710 (GEDE…EDSL) and 718–727 (QQEELQEESE). Over residues 734–744 (SSSSPTQSETP) the composition is skewed to low complexity. Phosphoserine is present on residues Ser-764 and Ser-772. Positions 793–861 (WSVADVVRFI…RIKFAFYEQF (69 aa)) constitute an SAM domain.

Interacts with MYOD1. Component of the SLC (SFMBT1-LSD1-CoREST) corepressor complex, which also contains KDM1A/LSD1 and RCOR1/CoREST. Interacts with KDM1A/LSD1 and RCOR1/CoREST. Interacts with MYOD1. Interacts with L3MBTL3. As to expression, highly expressed in the testis, low expression is detected in brain, kidney, heart and lung. Highly expressed in germ cells, where it associates with the synaptic regions of meiotic chromosomes in pachytene stage spermatocytes.

It localises to the nucleus. Its function is as follows. Histone-binding protein, which is part of various corepressor complexes. Mediates the recruitment of corepressor complexes to target genes, followed by chromatin compaction and repression of transcription. Plays a role during myogenesis: required for the maintenance of undifferentiated states of myogenic progenitor cells via interaction with MYOD1. Interaction with MYOD1 leads to the recruitment of associated corepressors and silencing of MYOD1 target genes. Part of the SLC complex in germ cells, where it may play a role during spermatogenesis. In Mus musculus (Mouse), this protein is Scm-like with four MBT domains protein 1 (Sfmbt1).